A 150-amino-acid chain; its full sequence is Viral late gene transcription factor 2 (150 aa).

This sequence belongs to the chordopoxvirinae VLTF-2 family. As to quaternary structure, interacts with itself. Interacts with the late transcription factors VLTF-1.

In terms of biological role, acts with RNA polymerase to initiate transcription from late gene promoters. This is Viral late gene transcription factor 2 (VLTF2) from Homo sapiens (Human).